The primary structure comprises 362 residues: DNA polymerase IV (362 aa).

The UmuC domain occupies 6–187; it reads IIHVDMDAFY…LPVSSFHGVG (182 aa). Asp-10 and Asp-105 together coordinate Mg(2+). Glu-106 is an active-site residue.

This sequence belongs to the DNA polymerase type-Y family. As to quaternary structure, monomer. Mg(2+) serves as cofactor.

It localises to the cytoplasm. The catalysed reaction is DNA(n) + a 2'-deoxyribonucleoside 5'-triphosphate = DNA(n+1) + diphosphate. Its function is as follows. Poorly processive, error-prone DNA polymerase involved in untargeted mutagenesis. Copies undamaged DNA at stalled replication forks, which arise in vivo from mismatched or misaligned primer ends. These misaligned primers can be extended by PolIV. Exhibits no 3'-5' exonuclease (proofreading) activity. May be involved in translesional synthesis, in conjunction with the beta clamp from PolIII. This is DNA polymerase IV from Leptospira interrogans serogroup Icterohaemorrhagiae serovar copenhageni (strain Fiocruz L1-130).